Consider the following 260-residue polypeptide: Indole-3-glycerol phosphate synthase (260 aa).

Belongs to the TrpC family.

The catalysed reaction is 1-(2-carboxyphenylamino)-1-deoxy-D-ribulose 5-phosphate + H(+) = (1S,2R)-1-C-(indol-3-yl)glycerol 3-phosphate + CO2 + H2O. The protein operates within amino-acid biosynthesis; L-tryptophan biosynthesis; L-tryptophan from chorismate: step 4/5. This Nocardioides sp. (strain ATCC BAA-499 / JS614) protein is Indole-3-glycerol phosphate synthase.